The chain runs to 385 residues: Glucans biosynthesis protein C (385 aa).

10 consecutive transmembrane segments (helical) span residues 17 to 37, 60 to 80, 91 to 111, 137 to 157, 173 to 193, 212 to 232, 239 to 259, 274 to 294, 311 to 331, and 338 to 358; these read AWLMLLGIPFHISLIYSSHTW, MQVFFVISGYFSYMLFLRYPL, VGIPMLTAIPLLTLPQFIMLQ, ISHLWFLLVLVVMTTLCVWIF, KFSMVKLSVIFLCLGIGYAVI, FIVMQTLFYLPFFILGALAFI, LFTTPSRGCTLAAALAFVAYL, TESVITMVLGLWMVNVVFSFG, ASLFIYLVHHPLTLFFGAYIT, and WLGFLCGLIFVVGIAIILYEI.

The protein belongs to the acyltransferase 3 family. OpgC subfamily.

It localises to the cell membrane. Its pathway is glycan metabolism; osmoregulated periplasmic glucan (OPG) biosynthesis. Functionally, necessary for the succinyl substitution of periplasmic glucans. Could catalyze the transfer of succinyl residues from the cytoplasmic side of the membrane to the nascent glucan backbones on the periplasmic side of the membrane. In Shigella sonnei (strain Ss046), this protein is Glucans biosynthesis protein C.